Here is a 448-residue protein sequence, read N- to C-terminus: Adenylosuccinate synthetase (448 aa).

GTP is bound by residues 36–42 (GDEGKGK) and 64–66 (GHT). The Proton acceptor role is filled by aspartate 37. Residues aspartate 37 and glycine 64 each contribute to the Mg(2+) site. IMP-binding positions include 37-40 (DEGK), 62-65 (NAGH), threonine 154, arginine 168, asparagine 246, threonine 261, and arginine 325. The active-site Proton donor is the histidine 65. A substrate-binding site is contributed by 321-327 (VTTKRKR). GTP is bound by residues arginine 327, 353 to 355 (KLD), and 436 to 438 (GVG).

This sequence belongs to the adenylosuccinate synthetase family. In terms of assembly, homodimer. Mg(2+) is required as a cofactor.

It localises to the cytoplasm. The catalysed reaction is IMP + L-aspartate + GTP = N(6)-(1,2-dicarboxyethyl)-AMP + GDP + phosphate + 2 H(+). It participates in purine metabolism; AMP biosynthesis via de novo pathway; AMP from IMP: step 1/2. In terms of biological role, plays an important role in the de novo pathway and in the salvage pathway of purine nucleotide biosynthesis. Catalyzes the first committed step in the biosynthesis of AMP from IMP. This is Adenylosuccinate synthetase from Drosophila pseudoobscura pseudoobscura (Fruit fly).